We begin with the raw amino-acid sequence, 201 residues long: MSRYRGPRFKKIRRLGALPGLTNKRPRAGSDLRNQSRSGKRSQYRIRLEEKQKLRFHYGITERQLLKYVRIARKAKGSTGQVLLQLLEMRLDNILFRLGMAPTIPGARQLVNHRHILVNGRIVDIPSYRCKPQDTIMARDEQKSIALIQNSLDLSPREELPKHLTLNPFPYKGLVNQIIDSKWVGLKINELLVVEYYSRQT.

A disordered region spans residues 15–43 (LGALPGLTNKRPRAGSDLRNQSRSGKRSQ). Residues 89–149 (MRLDNILFRL…DEQKSIALIQ (61 aa)) enclose the S4 RNA-binding domain.

In terms of assembly, component of the chloroplast small ribosomal subunit (SSU). Mature 70S chloroplast ribosomes of higher plants consist of a small (30S) and a large (50S) subunit. The 30S small subunit contains 1 molecule of ribosomal RNA (16S rRNA) and 24 different proteins. The 50S large subunit contains 3 rRNA molecules (23S, 5S and 4.5S rRNA) and 33 different proteins.

It localises to the plastid. It is found in the chloroplast. Component of the chloroplast ribosome (chloro-ribosome), a dedicated translation machinery responsible for the synthesis of chloroplast genome-encoded proteins, including proteins of the transcription and translation machinery and components of the photosynthetic apparatus. The polypeptide is Small ribosomal subunit protein uS4c (rps4) (Spinacia oleracea (Spinach)).